Consider the following 257-residue polypeptide: Short chain dehydrogenase ausX (257 aa).

6 residues coordinate NADP(+): isoleucine 11, aspartate 57, arginine 119, tyrosine 151, lysine 155, and valine 184. The Proton acceptor role is filled by tyrosine 151. Lysine 155 (lowers pKa of active site Tyr) is an active-site residue.

It belongs to the short-chain dehydrogenases/reductases (SDR) family.

Its pathway is secondary metabolite biosynthesis; terpenoid biosynthesis. Its function is as follows. Short chain dehydrogenase; part of the gene cluster that mediates the biosynthesis of calidodehydroaustin, a fungal meroterpenoid. The first step of the pathway is the synthesis of 3,5-dimethylorsellinic acid by the polyketide synthase ausA. 3,5-dimethylorsellinic acid is then prenylated by the polyprenyl transferase ausN. Further epoxidation by the FAD-dependent monooxygenase ausM and cyclization by the probable terpene cyclase ausL lead to the formation of protoaustinoid A. Protoaustinoid A is then oxidized to spiro-lactone preaustinoid A3 by the combined action of the FAD-binding monooxygenases ausB and ausC, and the dioxygenase ausE. Acid-catalyzed keto-rearrangement and ring contraction of the tetraketide portion of preaustinoid A3 by ausJ lead to the formation of preaustinoid A4. The aldo-keto reductase ausK, with the help of ausH, is involved in the next step by transforming preaustinoid A4 into isoaustinone which is in turn hydroxylated by the P450 monooxygenase ausI to form austinolide. The cytochrome P450 monooxygenase ausG modifies austinolide to austinol. Austinol is further acetylated to austin by the O-acetyltransferase ausP, which spontaneously changes to dehydroaustin. The cytochrome P450 monooxygenase ausR then converts dehydroaustin is into 7-dehydrodehydroaustin. The hydroxylation catalyzed by ausR permits the O-acetyltransferase ausQ to add an additional acetyl group to the molecule, leading to the formation of acetoxydehydroaustin. The short chain dehydrogenase ausT catalyzes the reduction of the double bond present between carbon atoms 1 and 2 to convert 7-dehydrodehydroaustin into 1,2-dihydro-7-hydroxydehydroaustin. AusQ catalyzes not only an acetylation reaction but also the addition of the PKS ausV diketide product to 1,2-dihydro-7-hydroxydehydroaustin, forming precalidodehydroaustin. Finally, the iron/alpha-ketoglutarate-dependent dioxygenase converts precalidodehydroaustin into calidodehydroaustin. This chain is Short chain dehydrogenase ausX, found in Aspergillus calidoustus.